Here is a 294-residue protein sequence, read N- to C-terminus: 33 kDa chaperonin (294 aa).

Cystine bridges form between Cys-239/Cys-241 and Cys-272/Cys-275.

The protein belongs to the HSP33 family. Under oxidizing conditions two disulfide bonds are formed involving the reactive cysteines. Under reducing conditions zinc is bound to the reactive cysteines and the protein is inactive.

The protein resides in the cytoplasm. Redox regulated molecular chaperone. Protects both thermally unfolding and oxidatively damaged proteins from irreversible aggregation. Plays an important role in the bacterial defense system toward oxidative stress. The protein is 33 kDa chaperonin of Listeria welshimeri serovar 6b (strain ATCC 35897 / DSM 20650 / CCUG 15529 / CIP 8149 / NCTC 11857 / SLCC 5334 / V8).